The primary structure comprises 296 residues: Lipoyl synthase (296 aa).

[4Fe-4S] cluster contacts are provided by C37, C42, C48, C63, C67, C70, and S276. Positions 49 to 265 constitute a Radical SAM core domain; the sequence is WSKKHATMMI…ERVARTKGFL (217 aa).

It belongs to the radical SAM superfamily. Lipoyl synthase family. The cofactor is [4Fe-4S] cluster.

The protein resides in the cytoplasm. It catalyses the reaction [[Fe-S] cluster scaffold protein carrying a second [4Fe-4S](2+) cluster] + N(6)-octanoyl-L-lysyl-[protein] + 2 oxidized [2Fe-2S]-[ferredoxin] + 2 S-adenosyl-L-methionine + 4 H(+) = [[Fe-S] cluster scaffold protein] + N(6)-[(R)-dihydrolipoyl]-L-lysyl-[protein] + 4 Fe(3+) + 2 hydrogen sulfide + 2 5'-deoxyadenosine + 2 L-methionine + 2 reduced [2Fe-2S]-[ferredoxin]. The protein operates within protein modification; protein lipoylation via endogenous pathway; protein N(6)-(lipoyl)lysine from octanoyl-[acyl-carrier-protein]: step 2/2. Functionally, catalyzes the radical-mediated insertion of two sulfur atoms into the C-6 and C-8 positions of the octanoyl moiety bound to the lipoyl domains of lipoate-dependent enzymes, thereby converting the octanoylated domains into lipoylated derivatives. This chain is Lipoyl synthase, found in Rickettsia canadensis (strain McKiel).